Here is a 909-residue protein sequence, read N- to C-terminus: Protein translocase subunit SecA (909 aa).

ATP is bound by residues Gln87, 105–109, and Asp507; that span reads GEGKT. 2 disordered regions span residues 567–586 and 859–909; these read RRID…PGSS and YSEA…GKLD. Basic and acidic residues predominate over residues 865-889; that stretch reads EHQSVTEGHEAKQQPFVRKSDKIGR. Cys893, Cys895, Cys904, and His905 together coordinate Zn(2+). A compositionally biased stretch (basic residues) spans 899–909; sequence RKYKQCHGKLD.

It belongs to the SecA family. Monomer and homodimer. Part of the essential Sec protein translocation apparatus which comprises SecA, SecYEG and auxiliary proteins SecDF-YajC and YidC. Requires Zn(2+) as cofactor.

The protein localises to the cell inner membrane. Its subcellular location is the cytoplasm. The enzyme catalyses ATP + H2O + cellular proteinSide 1 = ADP + phosphate + cellular proteinSide 2.. In terms of biological role, part of the Sec protein translocase complex. Interacts with the SecYEG preprotein conducting channel. Has a central role in coupling the hydrolysis of ATP to the transfer of proteins into and across the cell membrane, serving both as a receptor for the preprotein-SecB complex and as an ATP-driven molecular motor driving the stepwise translocation of polypeptide chains across the membrane. The polypeptide is Protein translocase subunit SecA (Nitrosomonas eutropha (strain DSM 101675 / C91 / Nm57)).